A 2353-amino-acid polypeptide reads, in one-letter code: Otogelin-like protein (2353 aa).

Positions 1–31 (MNIVRKLNLMIPWSIFLLHVLLFSLQEYICA) are cleaved as a signal peptide. The 177-residue stretch at 121-297 (GICKTWGQYH…VQTPDDTKCV (177 aa)) folds into the VWFD 1 domain. Disulfide bonds link Cys123-Cys257 and Cys145-Cys296. The N-linked (GlcNAc...) asparagine glycan is linked to Asn144. The region spanning 390–443 (CDDSFVHRDCISCCPPTCTFEKQCLGSNLHCLDGCYCPDGLVMDNGTCISLENC) is the TIL 1 domain. 2 N-linked (GlcNAc...) asparagine glycosylation sites follow: Asn434 and Asn473. The region spanning 481–654 (VQCSVVGDSH…NAWRVSSTCF (174 aa)) is the VWFD 2 domain. Cystine bridges form between Cys483–Cys618, Cys505–Cys653, and Cys527–Cys535. Positions 745–800 (CQKGMLYHHCSSFCLHSCISLSSPEQCSDDCAEGCNCPEGKFYEDTLNFCVPIFHC) constitute a TIL 2 domain. Residues Asn826 and Asn876 are each glycosylated (N-linked (GlcNAc...) asparagine). One can recognise a VWFD 3 domain in the interval 946 to 1115 (AVCTIYGDRH…SWALGQCESP (170 aa)). Cystine bridges form between Cys948–Cys1078 and Cys992–Cys999. Residues Asn1289, Asn1604, and Asn2198 are each glycosylated (N-linked (GlcNAc...) asparagine). The VWFD 4 domain occupies 1534–1723 (CRCSMLSELS…SWEIEKSFEV (190 aa)). Residues Cys1536 and Cys1683 are joined by a disulfide bond. 4 disulfides stabilise this stretch: Cys2261-Cys2317, Cys2282-Cys2331, Cys2293-Cys2348, and Cys2297-Cys2350. The CTCK domain maps to 2261 to 2353 (CKREERICQK…EPIDCTCQWN (93 aa)).

This sequence belongs to the otogelin family. As to expression, expressed at high levels in fetal inner ear and heart. Low levels in fetal skeletal muscle, kidney, spleen and colon. Not detected in fetal liver, lung, brain, nor in fetal stomach. In adult tissues, highest levels in brain, kidney, heart and retina. Relatively low levels in lung, spleen and duodenum. Not detected in adult skeletal muscle, liver, nor testis.

It is found in the secreted. The protein is Otogelin-like protein (OTOGL) of Homo sapiens (Human).